The primary structure comprises 185 residues: Peptide methionine sulfoxide reductase MsrA (185 aa).

Cys-12 is a catalytic residue.

This sequence belongs to the MsrA Met sulfoxide reductase family.

The catalysed reaction is L-methionyl-[protein] + [thioredoxin]-disulfide + H2O = L-methionyl-(S)-S-oxide-[protein] + [thioredoxin]-dithiol. It carries out the reaction [thioredoxin]-disulfide + L-methionine + H2O = L-methionine (S)-S-oxide + [thioredoxin]-dithiol. Has an important function as a repair enzyme for proteins that have been inactivated by oxidation. Catalyzes the reversible oxidation-reduction of methionine sulfoxide in proteins to methionine. The sequence is that of Peptide methionine sulfoxide reductase MsrA from Granulibacter bethesdensis (strain ATCC BAA-1260 / CGDNIH1).